The sequence spans 297 residues: Release factor glutamine methyltransferase (297 aa).

S-adenosyl-L-methionine contacts are provided by residues 134–138, D157, and N200; that span reads GTGSG. Substrate is bound at residue 200 to 203; it reads NPPY.

It belongs to the protein N5-glutamine methyltransferase family. PrmC subfamily.

The enzyme catalyses L-glutaminyl-[peptide chain release factor] + S-adenosyl-L-methionine = N(5)-methyl-L-glutaminyl-[peptide chain release factor] + S-adenosyl-L-homocysteine + H(+). Functionally, methylates the class 1 translation termination release factors RF1/PrfA and RF2/PrfB on the glutamine residue of the universally conserved GGQ motif. This chain is Release factor glutamine methyltransferase, found in Bradyrhizobium diazoefficiens (strain JCM 10833 / BCRC 13528 / IAM 13628 / NBRC 14792 / USDA 110).